We begin with the raw amino-acid sequence, 1093 residues long: Leukemia inhibitory factor receptor (1093 aa).

Positions 1-43 are cleaved as a signal peptide; sequence MGAFSWWRQPSWMADNKRGRMTPSLPWLLSALTLLHLMMHVNG. The Extracellular portion of the chain corresponds to 44–829; sequence LKRGVQQDLK…SMFVVTKENS (786 aa). A Fibronectin type-III 1 domain is found at 45–127; that stretch reads KRGVQQDLKC…QSKFTLNEKD (83 aa). Intrachain disulfides connect Cys54–Cys64 and Cys81–Cys89. N-linked (GlcNAc...) asparagine glycosylation is found at Asn165, Asn200, Asn239, and Asn262. 2 disulfide bridges follow: Cys209–Cys266 and Cys337–Cys347. Fibronectin type-III domains lie at 331–428, 431–530, 534–625, 623–715, and 720–829; these read VPQK…ERVA, VPIS…TEAT, GPDT…IPND, PNDD…IGYI, and PIVA…KENS. Residues Asn386, Asn403, Asn422, Asn441, Asn454, and Asn477 are each glycosylated (N-linked (GlcNAc...) asparagine). Cys462 and Cys507 are disulfide-bonded. The WSXWS motif signature appears at 515–519; sequence WSKWS. 6 N-linked (GlcNAc...) asparagine glycosylation sites follow: Asn568, Asn648, Asn659, Asn676, Asn725, and Asn783. The chain crosses the membrane as a helical span at residues 830-850; it reads VGLIIAILIPVAVAVIVGVVT. Over 851-1093 the chain is Cytoplasmic; it reads SILCYRKREW…TNFFQNKPND (243 aa). A Box 1 motif motif is present at residues 865 to 873; it reads FYPDIPNPE. Disordered stretches follow at residues 908 to 941 and 1003 to 1093; these read ESRS…ENQA and LPIN…KPND. Phosphoserine is present on residues Ser923 and Ser1040. Polar residues-rich tracts occupy residues 1028–1063 and 1082–1093; these read ANVN…NSRQ and SFTNFFQNKPND.

The protein belongs to the type I cytokine receptor family. Type 2 subfamily. As to quaternary structure, heterodimer composed of LIFR and IL6ST. The heterodimer formed by LIFR and IL6ST interacts with the complex formed by CNTF and CNTFR.

It is found in the cell membrane. Its function is as follows. Signal-transducing molecule. May have a common pathway with IL6ST. The soluble form inhibits the biological activity of LIF by blocking its binding to receptors on target cells. The chain is Leukemia inhibitory factor receptor (Lifr) from Rattus norvegicus (Rat).